The chain runs to 473 residues: Aspartyl/glutamyl-tRNA(Asn/Gln) amidotransferase subunit B (473 aa).

Belongs to the GatB/GatE family. GatB subfamily. As to quaternary structure, heterotrimer of A, B and C subunits.

The catalysed reaction is L-glutamyl-tRNA(Gln) + L-glutamine + ATP + H2O = L-glutaminyl-tRNA(Gln) + L-glutamate + ADP + phosphate + H(+). The enzyme catalyses L-aspartyl-tRNA(Asn) + L-glutamine + ATP + H2O = L-asparaginyl-tRNA(Asn) + L-glutamate + ADP + phosphate + 2 H(+). Its function is as follows. Allows the formation of correctly charged Asn-tRNA(Asn) or Gln-tRNA(Gln) through the transamidation of misacylated Asp-tRNA(Asn) or Glu-tRNA(Gln) in organisms which lack either or both of asparaginyl-tRNA or glutaminyl-tRNA synthetases. The reaction takes place in the presence of glutamine and ATP through an activated phospho-Asp-tRNA(Asn) or phospho-Glu-tRNA(Gln). In Wolbachia pipientis subsp. Culex pipiens (strain wPip), this protein is Aspartyl/glutamyl-tRNA(Asn/Gln) amidotransferase subunit B.